The chain runs to 114 residues: UPF0342 protein SERP1381 (114 aa).

This sequence belongs to the UPF0342 family.

The protein is UPF0342 protein SERP1381 of Staphylococcus epidermidis (strain ATCC 35984 / DSM 28319 / BCRC 17069 / CCUG 31568 / BM 3577 / RP62A).